A 64-amino-acid chain; its full sequence is Large ribosomal subunit protein bL28 (64 aa).

It belongs to the bacterial ribosomal protein bL28 family.

This is Large ribosomal subunit protein bL28 from Elusimicrobium minutum (strain Pei191).